The following is a 622-amino-acid chain: Dehydrogenase xptC (622 aa).

Residues 1–18 (MAKLSVILLFRSLLLCGA) form the signal peptide. FAD contacts are provided by residues 47–48 (VS), 68–69 (EA), and 123–126 (NAMI). 5 N-linked (GlcNAc...) asparagine glycosylation sites follow: Asn-160, Asn-173, Asn-357, Asn-364, and Asn-480. 598–599 (PM) lines the FAD pocket.

The protein belongs to the GMC oxidoreductase family. In terms of assembly, homodimer. FAD is required as a cofactor.

It participates in secondary metabolite biosynthesis. Functionally, dehydrogenase involved in the conversion of monodictyphenone to the prenyl xanthones such as emericellin, shamixanthone and epishamixanthone. Monodictyphenone is first converted to variecoxanthone A via a paeciloxanthone intermediate by the consecutive actions of the FAD-dependent monooxygenase mdpD and the xanthone prenyltransferase xptB. XptB catalyzes regular O-prenylation at the hydroxy group of C-7 of the xanthone ring. Variecoxanthone A is further prenylated to emericellin by xptA before being reduced to shamixanthone and epishamixanthone by the dehydrogenase xptC. The protein is Dehydrogenase xptC of Emericella nidulans (strain FGSC A4 / ATCC 38163 / CBS 112.46 / NRRL 194 / M139) (Aspergillus nidulans).